A 374-amino-acid polypeptide reads, in one-letter code: 1,3,6,8-tetrahydroxynaphthalene synthase (374 aa).

Cys138 is an active-site residue.

It belongs to the thiolase-like superfamily. Chalcone/stilbene synthases family. In terms of assembly, homodimer.

It catalyses the reaction 5 malonyl-CoA + 5 H(+) = naphthalene-1,3,6,8-tetrol + 5 CO2 + 5 CoA + H2O. Its pathway is pigment biosynthesis; melanin biosynthesis. Functionally, involved in the biosynthesis of melanin but also various secondary metabolites containing a naphthoquinone ring. Catalyzes the iterative condensation of five CoA-linked malonyl units to form a pentaketide intermediate. THNS subsequently catalyzes the dual intramolecular Claisen and aldol condensations of this linear intermediate to produce the fused ring of 1,3,6,8-tetrahydroxynaphthalene (THN). The sequence is that of 1,3,6,8-tetrahydroxynaphthalene synthase from Streptomyces coelicolor (strain ATCC BAA-471 / A3(2) / M145).